An 833-amino-acid polypeptide reads, in one-letter code: Copper-exporting P-type ATPase (833 aa).

2 consecutive HMA domains span residues 3–64 and 98–161; these read QTID…YGAT and ESQQ…YGAE. Residues cysteine 14, cysteine 17, cysteine 109, and cysteine 112 each contribute to the Cu(+) site. Transmembrane regions (helical) follow at residues 186–206, 217–237, 253–273, 283–303, 437–457, and 463–483; these read WQAI…MIGD, LWLA…GHFY, TLVA…NLWP, LYYE…MLEA, AVFV…WYFF, and IVYT…CALG. The active-site 4-aspartylphosphate intermediate is aspartate 522. The Mg(2+) site is built by aspartate 719 and aspartate 723. 2 helical membrane passes run 778–798 and 800–820; these read LGAF…LWPF and GTLL…ITVV.

This sequence belongs to the cation transport ATPase (P-type) (TC 3.A.3) family. Type IB subfamily.

It is found in the cell inner membrane. Its subcellular location is the cytoplasm. The enzyme catalyses Cu(+)(in) + ATP + H2O = Cu(+)(out) + ADP + phosphate + H(+). Its function is as follows. Involved in Cu(+) export. Essential for copper tolerance under both aerobic and anaerobic conditions. Functionally, probably also encodes a cytoplasmic copper chaperone CopA(Z) that is produced by programmed ribosomal frameshifting. This Salmonella typhimurium (strain LT2 / SGSC1412 / ATCC 700720) protein is Copper-exporting P-type ATPase (copA).